We begin with the raw amino-acid sequence, 173 residues long: Glucagon family neuropeptides (173 aa).

An N-terminal signal peptide occupies residues 1–22 (MSSKATLALLIYGIIMHYSVYS). The propeptide occupies 23–80 (SPLGLNYPNLRLENEVYDEDGNSLPALAFDSDQIAIRSPPSVADDLYTLYYPPEKGTE). At Lys166 the chain carries Lysine amide. Residues 170-173 (LGYL) constitute a propeptide that is removed on maturation.

Belongs to the glucagon family.

Its subcellular location is the secreted. Primary role of GHRH is to release GH from the pituitary. In terms of biological role, PACAP plays pivotal roles as a neurotransmitter and/or a neuromodulator. The protein is Glucagon family neuropeptides of Oncorhynchus nerka (Sockeye salmon).